Here is a 336-residue protein sequence, read N- to C-terminus: Ornithine carbamoyltransferase, catabolic (336 aa).

Carbamoyl phosphate contacts are provided by residues 57–60 (STRT), Q84, R108, and 135–138 (HPTQ). Residues N168, D232, and 236-237 (SM) each bind L-ornithine. Carbamoyl phosphate is bound by residues 274–275 (CL) and R321.

Belongs to the aspartate/ornithine carbamoyltransferase superfamily. OTCase family. As to quaternary structure, nonameric or dodecamer (tetramer of trimers).

It localises to the cytoplasm. It carries out the reaction carbamoyl phosphate + L-ornithine = L-citrulline + phosphate + H(+). Its pathway is amino-acid degradation; L-arginine degradation via ADI pathway; carbamoyl phosphate from L-arginine: step 2/2. Its activity is regulated as follows. Inhibited by 2-aminopentanoic acid (norvaline). Activated by phosphate and nucleoside monophosphates such as AMP, GMP, CMP, UMP. Allosterically inhibited by the polyamines such as spermidine and putrescine. Its function is as follows. Involved in the catabolism of arginine. Catalyzes the phosphorolysis of citrulline, the reverse reaction of the biosynthetic one, yielding ornithine and carbamoyl phosphate which serve to generate ATP from ADP. This catabolic OTCase does not carry out the biosynthetic reaction because of a poor affinity and a marked cooperativity for carbamoyl phosphate. This chain is Ornithine carbamoyltransferase, catabolic, found in Pseudomonas aeruginosa (strain ATCC 15692 / DSM 22644 / CIP 104116 / JCM 14847 / LMG 12228 / 1C / PRS 101 / PAO1).